Reading from the N-terminus, the 37-residue chain is Large ribosomal subunit protein bL36 (37 aa).

It belongs to the bacterial ribosomal protein bL36 family.

The protein is Large ribosomal subunit protein bL36 of Synechococcus elongatus (strain ATCC 33912 / PCC 7942 / FACHB-805) (Anacystis nidulans R2).